A 108-amino-acid chain; its full sequence is Large ribosomal subunit protein eL36x (108 aa).

Disordered regions lie at residues 13-34 (GHVV…KTSK) and 75-108 (KLGT…EKKK). The segment covering 75 to 84 (KLGTHKRAKR) has biased composition (basic residues).

Belongs to the eukaryotic ribosomal protein eL36 family.

This is Large ribosomal subunit protein eL36x (RPL36C) from Arabidopsis thaliana (Mouse-ear cress).